A 213-amino-acid chain; its full sequence is Pyrrolidone-carboxylate peptidase (213 aa).

Residues Glu-78, Cys-141, and His-165 contribute to the active site.

The protein belongs to the peptidase C15 family. As to quaternary structure, homotetramer.

Its subcellular location is the cytoplasm. The enzyme catalyses Release of an N-terminal pyroglutamyl group from a polypeptide, the second amino acid generally not being Pro.. Removes 5-oxoproline from various penultimate amino acid residues except L-proline. This is Pyrrolidone-carboxylate peptidase from Clostridium perfringens (strain ATCC 13124 / DSM 756 / JCM 1290 / NCIMB 6125 / NCTC 8237 / Type A).